The following is a 369-amino-acid chain: Olfactory receptor 2T1 (369 aa).

Residues 1–76 (MWQEYYFLNV…LFNRKETSGL (76 aa)) lie on the Extracellular side of the membrane. N-linked (GlcNAc...) asparagine glycosylation occurs at N56. Residues 77–97 (IFAIISIIFFTALMANGVMIF) form a helical membrane-spanning segment. The Cytoplasmic portion of the chain corresponds to 98–107 (LIQTDLRLHT). A helical transmembrane segment spans residues 108–128 (PMYFLLSHLSLIDMMYISTIV). Topologically, residues 129-148 (PKMLVNYLLDQRTISFVGCT) are extracellular. The cysteines at positions 147 and 239 are disulfide-linked. Residues 149-169 (AQHFLYLTLVGAEFFLLGLMA) form a helical membrane-spanning segment. The Cytoplasmic segment spans residues 170 to 191 (YDRYVAICNPLRYPVLMSRRVC). A helical membrane pass occupies residues 192-212 (WMIIAGSWFGGSLDGFLLTPI). Residues 213 to 247 (TMSFPFCNSREINHFFCEAPAVLKLACADTALYET) are Extracellular-facing. Residues 248 to 268 (VMYVCCVLMLLIPFSVVLASY) traverse the membrane as a helical segment. At 269–286 (ARILTTVQCMSSVEGRKK) the chain is on the cytoplasmic side. A helical membrane pass occupies residues 287-307 (AFATCSSHMTVVSLFYGAAMY). Residues 308 to 321 (TYMLPHSYHKPAQD) lie on the Extracellular side of the membrane. A helical membrane pass occupies residues 322-342 (KVLSVFYTILTPMLNPLIYSL). Topologically, residues 343–369 (RNKDVTGALKRALGRFKGPQRVSGGVF) are cytoplasmic.

It belongs to the G-protein coupled receptor 1 family.

The protein localises to the cell membrane. Odorant receptor. This Homo sapiens (Human) protein is Olfactory receptor 2T1 (OR2T1).